A 321-amino-acid chain; its full sequence is uncharacterized protein (321 aa).

Positions 1-22 (MKSIYKYTFMLFVFLFGTLMMA) are cleaved as a signal peptide.

This sequence belongs to the bacterial solute-binding protein 1 family. WtpA subfamily.

This is an uncharacterized protein from Petrotoga mobilis (strain DSM 10674 / SJ95).